The primary structure comprises 307 residues: Ribonuclease Z (307 aa).

Positions 64, 66, 68, 69, 141, 209, and 267 each coordinate Zn(2+). Aspartate 68 serves as the catalytic Proton acceptor.

Belongs to the RNase Z family. As to quaternary structure, homodimer. The cofactor is Zn(2+).

The enzyme catalyses Endonucleolytic cleavage of RNA, removing extra 3' nucleotides from tRNA precursor, generating 3' termini of tRNAs. A 3'-hydroxy group is left at the tRNA terminus and a 5'-phosphoryl group is left at the trailer molecule.. Its function is as follows. Zinc phosphodiesterase, which displays some tRNA 3'-processing endonuclease activity. Probably involved in tRNA maturation, by removing a 3'-trailer from precursor tRNA. The polypeptide is Ribonuclease Z (Thermoplasma acidophilum (strain ATCC 25905 / DSM 1728 / JCM 9062 / NBRC 15155 / AMRC-C165)).